Reading from the N-terminus, the 103-residue chain is Integration host factor subunit alpha (103 aa).

It belongs to the bacterial histone-like protein family. In terms of assembly, heterodimer of an alpha and a beta chain.

Its function is as follows. This protein is one of the two subunits of integration host factor, a specific DNA-binding protein that functions in genetic recombination as well as in transcriptional and translational control. The polypeptide is Integration host factor subunit alpha (Bartonella bacilliformis (strain ATCC 35685 / KC583 / Herrer 020/F12,63)).